A 52-amino-acid polypeptide reads, in one-letter code: uncharacterized protein (52 aa).

The chain crosses the membrane as a helical span at residues 21 to 40 (VAMNSYVELLFLSVPLIHIF).

The protein resides in the cell membrane. This is an uncharacterized protein from Bacillus subtilis (strain 168).